Here is a 289-residue protein sequence, read N- to C-terminus: Protease HtpX homolog (289 aa).

2 helical membrane-spanning segments follow: residues 10-30 and 34-54; these read TAAL…VIGS and STTP…YGYW. His138 lines the Zn(2+) pocket. Glu139 is an active-site residue. His142 is a Zn(2+) binding site. Transmembrane regions (helical) follow at residues 153–173 and 182–202; these read VAAA…IFGG and LAVM…QSAI. A Zn(2+)-binding site is contributed by Glu207.

It belongs to the peptidase M48B family. The cofactor is Zn(2+).

It localises to the cell membrane. This chain is Protease HtpX homolog, found in Arthrobacter sp. (strain FB24).